Reading from the N-terminus, the 876-residue chain is Bifunctional uridylyltransferase/uridylyl-removing enzyme (876 aa).

The segment at 1–332 is uridylyltransferase; it reads MPYQSPITFQ…NNGEEAEAVI (332 aa). The tract at residues 333 to 692 is uridylyl-removing; the sequence is IDDDFQRRGN…LSKKATRGGT (360 aa). Residues 451 to 573 form the HD domain; sequence VDEHSIRLLK…VRDEERLEYL (123 aa). ACT domains follow at residues 693-777 and 800-876; these read EVFI…RIPR and LMEF…PSAQ.

Belongs to the GlnD family. The cofactor is Mg(2+).

It catalyses the reaction [protein-PII]-L-tyrosine + UTP = [protein-PII]-uridylyl-L-tyrosine + diphosphate. It carries out the reaction [protein-PII]-uridylyl-L-tyrosine + H2O = [protein-PII]-L-tyrosine + UMP + H(+). With respect to regulation, uridylyltransferase (UTase) activity is inhibited by glutamine, while glutamine activates uridylyl-removing (UR) activity. Modifies, by uridylylation and deuridylylation, the PII regulatory proteins (GlnB and homologs), in response to the nitrogen status of the cell that GlnD senses through the glutamine level. Under low glutamine levels, catalyzes the conversion of the PII proteins and UTP to PII-UMP and PPi, while under higher glutamine levels, GlnD hydrolyzes PII-UMP to PII and UMP (deuridylylation). Thus, controls uridylylation state and activity of the PII proteins, and plays an important role in the regulation of nitrogen assimilation and metabolism. In Vibrio cholerae serotype O1 (strain ATCC 39315 / El Tor Inaba N16961), this protein is Bifunctional uridylyltransferase/uridylyl-removing enzyme.